Consider the following 395-residue polypeptide: F-box only protein 7 (395 aa).

Positions Asn19–Ile70 constitute an F-box domain.

This Arabidopsis thaliana (Mouse-ear cress) protein is F-box only protein 7 (FBX7).